The sequence spans 427 residues: Histidine--tRNA ligase (427 aa).

It belongs to the class-II aminoacyl-tRNA synthetase family. In terms of assembly, homodimer.

It localises to the cytoplasm. It catalyses the reaction tRNA(His) + L-histidine + ATP = L-histidyl-tRNA(His) + AMP + diphosphate + H(+). The sequence is that of Histidine--tRNA ligase from Streptococcus suis (strain 98HAH33).